We begin with the raw amino-acid sequence, 956 residues long: Ubiquitin carboxyl-terminal hydrolase CYLD (956 aa).

The interval 106–593 (CEERFSLFKN…LEIMIGKKKG (488 aa)) is interaction with TRIP. CAP-Gly domains lie at 153 to 198 (LAER…VFVA) and 253 to 286 (DVLP…VQLC). Residues 309-353 (SVTQERRPPKLAFMSRGVGDKGSSSHNKPKATGSTSDPGNRNRSE) are disordered. A compositionally biased stretch (polar residues) spans 330–349 (GSSSHNKPKATGSTSDPGNR). Residue S387 is modified to Phosphoserine. The disordered stretch occupies residues 392–411 (STDFDRSSPPLQPPPVNSLT). The interaction with TRAF2 stretch occupies residues 394 to 469 (DFDRSSPPLQ…LAMPPGNSHG (76 aa)). Phosphoserine is present on residues S418 and S422. The tract at residues 470-554 (LEVGSLAEVK…FASLQPVSNQ (85 aa)) is interaction with IKBKG/NEMO. The CAP-Gly 3 domain maps to 492 to 535 (GQPPGLNEVLAGLELEDECAGCTDGTFRGTRYFTCALKKALFVK). The region spanning 592–950 (KGIQGHYNSC…DAYMCMYQSP (359 aa)) is the USP domain. C601 (nucleophile) is an active-site residue. The segment at 781 to 833 (LEDTPRQCRICGGLAMYECRECYDDPDISAGKIKQFCKTCNTQVHLHPKRLNH) is B-box. Zn(2+)-binding residues include C788, C791, C799, C802, C817, C820, H825, and H833. H871 (proton acceptor) is an active-site residue.

Belongs to the peptidase C19 family. As to quaternary structure, interacts (via CAP-Gly domain) with IKBKG/NEMO (via proline-rich C-terminal region). Interacts with TRAF2 and TRIP. Interacts with PLK1, DVL1, DVL3, MAVS, TBK1, IKKE and RIGI. Interacts (via CAP-Gly domain) with microtubules. Interacts with HDAC6 and BCL3. Interacts with MAP3K7. Identified in a complex with TRAF6 and SQSTM1. Interacts with OPTN and SQSTM1. Interacts with CEP350. Interacts with RNF31; the interaction is indirect and is mediated via SPATA2. Interacts with SPATA2 (via the PUB domain); the interaction is direct and recruits CYLD to the LUBAC complex, thereby regulating TNF-alpha-induced necroptosis. Post-translationally, ubiquitinated. Polyubiquitinated in hepatocytes treated with palmitic acid. Ubiquitination is mediated by E3 ligase TRIM47 and leads to proteasomal degradation. Phosphorylated on several serine residues by IKKA and/or IKKB in response to immune stimuli. Phosphorylation requires IKBKG. Phosphorylation abolishes TRAF2 deubiquitination, interferes with the activation of Jun kinases, and strongly reduces CD40-dependent gene activation by NF-kappa-B. In terms of tissue distribution, detected in fetal brain, testis, and skeletal muscle, and at a lower level in adult brain, leukocytes, liver, heart, kidney, spleen, ovary and lung. Isoform 2 is found in all tissues except kidney.

The protein localises to the cytoplasm. It localises to the perinuclear region. It is found in the cytoskeleton. The protein resides in the cell membrane. Its subcellular location is the microtubule organizing center. The protein localises to the centrosome. It localises to the spindle. It is found in the cilium basal body. The catalysed reaction is Thiol-dependent hydrolysis of ester, thioester, amide, peptide and isopeptide bonds formed by the C-terminal Gly of ubiquitin (a 76-residue protein attached to proteins as an intracellular targeting signal).. Inhibited by phosphorylation at serine residues. Functionally, deubiquitinase that specifically cleaves 'Lys-63'- and linear 'Met-1'-linked polyubiquitin chains and is involved in NF-kappa-B activation and TNF-alpha-induced necroptosis. Negatively regulates NF-kappa-B activation by deubiquitinating upstream signaling factors. Contributes to the regulation of cell survival, proliferation and differentiation via its effects on NF-kappa-B activation. Negative regulator of Wnt signaling. Inhibits HDAC6 and thereby promotes acetylation of alpha-tubulin and stabilization of microtubules. Plays a role in the regulation of microtubule dynamics, and thereby contributes to the regulation of cell proliferation, cell polarization, cell migration, and angiogenesis. Required for normal cell cycle progress and normal cytokinesis. Inhibits nuclear translocation of NF-kappa-B. Plays a role in the regulation of inflammation and the innate immune response, via its effects on NF-kappa-B activation. Dispensable for the maturation of intrathymic natural killer cells, but required for the continued survival of immature natural killer cells. Negatively regulates TNFRSF11A signaling and osteoclastogenesis. Involved in the regulation of ciliogenesis, allowing ciliary basal bodies to migrate and dock to the plasma membrane; this process does not depend on NF-kappa-B activation. Ability to remove linear ('Met-1'-linked) polyubiquitin chains regulates innate immunity and TNF-alpha-induced necroptosis: recruited to the LUBAC complex via interaction with SPATA2 and restricts linear polyubiquitin formation on target proteins. Regulates innate immunity by restricting linear polyubiquitin formation on RIPK2 in response to NOD2 stimulation. Involved in TNF-alpha-induced necroptosis by removing linear ('Met-1'-linked) polyubiquitin chains from RIPK1, thereby regulating the kinase activity of RIPK1. Negatively regulates intestinal inflammation by removing 'Lys-63' linked polyubiquitin chain of NLRP6, thereby reducing the interaction between NLRP6 and PYCARD/ASC and formation of the NLRP6 inflammasome. Does not catalyze deubiquitination of heterotypic 'Lys-63'-/'Lys-48'-linked branched ubiquitin chains. Removes 'Lys-63' linked polyubiquitin chain of MAP3K7, which inhibits phosphorylation and blocks downstream activation of the JNK-p38 kinase cascades. Also removes 'Lys-63'-linked polyubiquitin chains of MAP3K1 and MA3P3K3, which inhibit their interaction with MAP2K1 and MAP2K2. In Homo sapiens (Human), this protein is Ubiquitin carboxyl-terminal hydrolase CYLD.